Consider the following 325-residue polypeptide: Homoserine O-succinyltransferase (325 aa).

Catalysis depends on Cys142, which acts as the Acyl-thioester intermediate. Positions 163 and 191 each coordinate substrate. His234 functions as the Proton acceptor in the catalytic mechanism. The active site involves Glu236. Residue Arg248 participates in substrate binding.

Belongs to the MetA family.

The protein resides in the cytoplasm. The catalysed reaction is L-homoserine + succinyl-CoA = O-succinyl-L-homoserine + CoA. It participates in amino-acid biosynthesis; L-methionine biosynthesis via de novo pathway; O-succinyl-L-homoserine from L-homoserine: step 1/1. In terms of biological role, transfers a succinyl group from succinyl-CoA to L-homoserine, forming succinyl-L-homoserine. This Bradyrhizobium japonicum protein is Homoserine O-succinyltransferase.